The following is an 81-amino-acid chain: Small ribosomal subunit protein bS16 (81 aa).

This sequence belongs to the bacterial ribosomal protein bS16 family.

The chain is Small ribosomal subunit protein bS16 from Agathobacter rectalis (strain ATCC 33656 / DSM 3377 / JCM 17463 / KCTC 5835 / VPI 0990) (Eubacterium rectale).